Here is a 377-residue protein sequence, read N- to C-terminus: Nitric oxide reductase FlRd-NAD(+) reductase (377 aa).

It belongs to the FAD-dependent oxidoreductase family. FAD serves as cofactor.

The protein localises to the cytoplasm. The enzyme catalyses 2 reduced [nitric oxide reductase rubredoxin domain] + NAD(+) + H(+) = 2 oxidized [nitric oxide reductase rubredoxin domain] + NADH. It functions in the pathway nitrogen metabolism; nitric oxide reduction. One of at least two accessory proteins for anaerobic nitric oxide (NO) reductase. Reduces the rubredoxin moiety of NO reductase. This Escherichia coli O127:H6 (strain E2348/69 / EPEC) protein is Nitric oxide reductase FlRd-NAD(+) reductase.